Here is a 125-residue protein sequence, read N- to C-terminus: Putative oxygen-evolving enhancer protein 2-2 (125 aa).

Ser15 bears the Phosphoserine mark.

This sequence belongs to the PsbP family.

The protein is Putative oxygen-evolving enhancer protein 2-2 (PSBP2) of Arabidopsis thaliana (Mouse-ear cress).